The chain runs to 139 residues: Maintenance of telomere capping protein 7 (139 aa).

2 helical membrane-spanning segments follow: residues 13–33 (SHHVLFAEPGFFLCNFFFVLL) and 42–62 (FYFLFILLFIIYIAIIYFVFI). The disordered stretch occupies residues 94–121 (RSVANPALPPQKKKKKKKKGTLRTGEVE). A compositionally biased stretch (basic residues) spans 104 to 114 (QKKKKKKKKGT).

The protein resides in the membrane. In terms of biological role, may be involved in telomere capping. In Saccharomyces cerevisiae (strain ATCC 204508 / S288c) (Baker's yeast), this protein is Maintenance of telomere capping protein 7 (MTC7).